A 288-amino-acid chain; its full sequence is 4-hydroxy-tetrahydrodipicolinate synthase (288 aa).

Position 47 (T47) interacts with pyruvate. Y136 (proton donor/acceptor) is an active-site residue. The active-site Schiff-base intermediate with substrate is K164. Residue I204 participates in pyruvate binding.

Belongs to the DapA family. Homotetramer; dimer of dimers.

Its subcellular location is the cytoplasm. The enzyme catalyses L-aspartate 4-semialdehyde + pyruvate = (2S,4S)-4-hydroxy-2,3,4,5-tetrahydrodipicolinate + H2O + H(+). The protein operates within amino-acid biosynthesis; L-lysine biosynthesis via DAP pathway; (S)-tetrahydrodipicolinate from L-aspartate: step 3/4. Functionally, catalyzes the condensation of (S)-aspartate-beta-semialdehyde [(S)-ASA] and pyruvate to 4-hydroxy-tetrahydrodipicolinate (HTPA). The chain is 4-hydroxy-tetrahydrodipicolinate synthase from Leuconostoc mesenteroides subsp. mesenteroides (strain ATCC 8293 / DSM 20343 / BCRC 11652 / CCM 1803 / JCM 6124 / NCDO 523 / NBRC 100496 / NCIMB 8023 / NCTC 12954 / NRRL B-1118 / 37Y).